Consider the following 103-residue polypeptide: UPF0145 protein Rsph17025_2361 (103 aa).

The protein belongs to the UPF0145 family.

This is UPF0145 protein Rsph17025_2361 from Cereibacter sphaeroides (strain ATCC 17025 / ATH 2.4.3) (Rhodobacter sphaeroides).